A 259-amino-acid polypeptide reads, in one-letter code: Leucyl/phenylalanyl-tRNA--protein transferase (259 aa).

This sequence belongs to the L/F-transferase family.

It is found in the cytoplasm. It catalyses the reaction N-terminal L-lysyl-[protein] + L-leucyl-tRNA(Leu) = N-terminal L-leucyl-L-lysyl-[protein] + tRNA(Leu) + H(+). The enzyme catalyses N-terminal L-arginyl-[protein] + L-leucyl-tRNA(Leu) = N-terminal L-leucyl-L-arginyl-[protein] + tRNA(Leu) + H(+). It carries out the reaction L-phenylalanyl-tRNA(Phe) + an N-terminal L-alpha-aminoacyl-[protein] = an N-terminal L-phenylalanyl-L-alpha-aminoacyl-[protein] + tRNA(Phe). Its function is as follows. Functions in the N-end rule pathway of protein degradation where it conjugates Leu, Phe and, less efficiently, Met from aminoacyl-tRNAs to the N-termini of proteins containing an N-terminal arginine or lysine. The chain is Leucyl/phenylalanyl-tRNA--protein transferase from Teredinibacter turnerae (strain ATCC 39867 / T7901).